Reading from the N-terminus, the 830-residue chain is Histone acetyltransferase KAT2A (830 aa).

Positions 1 to 94 (MAEPSQAPNP…RKAQVRGLPR (94 aa)) are disordered. Alanine 2 carries the N-acetylalanine modification. 2 stretches are compositionally biased toward pro residues: residues 7-33 (APNPVPAAQPRPLHSPAPAPTSTPAPS) and 41-51 (APTPAPAPAPA). Positions 58 to 69 (TGSGGAGVGSGG) are enriched in gly residues. A compositionally biased stretch (basic residues) spans 83–94 (SQRKAQVRGLPR). Serine 302 carries the post-translational modification Phosphoserine. The span at 398-417 (SFSPSMGGGSNSSLSLDSAG) shows a compositional bias: low complexity. A disordered region spans residues 398 to 426 (SFSPSMGGGSNSSLSLDSAGTEPMPAGEK). Residues 496 to 649 (VIGNSLTPKA…GATLMECELN (154 aa)) form the N-acetyltransferase domain. Lysine 542 bears the N6-acetyllysine mark. The active-site Proton donor/acceptor is the glutamate 568. Residues 572–574 (CAV), 579–585 (QVKGYGT), and tyrosine 610 each bind acetyl-CoA. Residues 572-574 (CAV), 579-585 (QVKGYGT), and tyrosine 610 each bind succinyl-CoA. Lysine 721 participates in a covalent cross-link: Glycyl lysine isopeptide (Lys-Gly) (interchain with G-Cter in SUMO2). Residues 721–825 (KDPDQLYTTL…KFFYFKLKEG (105 aa)) form the Bromo domain. A Phosphothreonine modification is found at threonine 728. Residues lysine 752 and lysine 784 each participate in a glycyl lysine isopeptide (Lys-Gly) (interchain with G-Cter in SUMO2) cross-link.

It belongs to the acetyltransferase family. GCN5 subfamily. In terms of assembly, interacts with EP300, CREBBP and ADA2. Component of the TFTC-HAT complex, at least composed of TAF5L, TAF6L, TAF3, TADA3L, SUPT3H/SPT3, TAF2/TAFII150, TAF4/TAFII135, TAF5/TAFII100, KAT2A/GCN5L2, TAF10 and TRRAP. Component of the STAGA transcription coactivator-HAT complex, at least composed of SUPT3H, KAT2A, SUPT7L, TAF5L, TAF6L, TADA3L, TAD1L, TAF10, TAF12, TRRAP and TAF9. The STAGA core complex is associated with a subcomplex required for histone deubiquitination composed of ATXN7L3, ENY2 and USP22. Component of the ADA2A-containing complex (ATAC), composed of KAT14, KAT2A, TADA2L, TADA3L, ZZ3, MBIP, WDR5, YEATS2, CCDC101 and DR1. In the complex, it probably interacts directly with KAT14, MBIP and WDR5. Interacts with PML. Interacts with CEBPB. Interacts with TACC1, TACC2 and TACC3. Interacts with RELA. Interacts with NFATC2. Interacts with TBX5. Interacts with PLK4. Associates with the 2-oxoglutarate dehydrogenase complex. Interacts with XPC; leading to KAT2A recruitment to promoters and subsequent acetylation of histones. Interacts with ERCC3/XPB; leading to KAT2A recruitment to promoters and subsequent acetylation of histones. Interacts with ISL1. Interactions of ISL1 with MLIP1 or KAT2A may be mutually exclusive. In terms of processing, acetylated at Lys-542, inhibiting the protein acetyltransferase activity. Deacetylation at Lys-542 by SIRT6 promotes phosphorylation at Ser-302 and Thr-728 and subsequent activation of the protein acetyltransferase activity, leading to acetylation and inactivation of PPARGC1A. In brain, highly expressed in the hippocampal CA1 region (at protein level). Also expressed in the hippocampal subregions CA3 and the dentate gyrus as well as in the cortex and prefrontal cortex. Expressed at low level in the cerebellum.

The protein resides in the nucleus. It localises to the chromosome. It is found in the cytoplasm. The protein localises to the cytoskeleton. Its subcellular location is the microtubule organizing center. The protein resides in the centrosome. The enzyme catalyses L-lysyl-[histone] + acetyl-CoA = N(6)-acetyl-L-lysyl-[histone] + CoA + H(+). It catalyses the reaction L-lysyl-[protein] + acetyl-CoA = N(6)-acetyl-L-lysyl-[protein] + CoA + H(+). The catalysed reaction is succinyl-CoA + L-lysyl-[protein] = N(6)-succinyl-L-lysyl-[protein] + CoA + H(+). It carries out the reaction glutaryl-CoA + L-lysyl-[protein] = N(6)-glutaryl-L-lysyl-[protein] + CoA + H(+). Its function is as follows. Protein lysine acyltransferase that can act as a acetyltransferase, glutaryltransferase, succinyltransferase or malonyltransferase, depending on the context. Acts as a histone lysine succinyltransferase: catalyzes succinylation of histone H3 on 'Lys-79' (H3K79succ), with a maximum frequency around the transcription start sites of genes. Succinylation of histones gives a specific tag for epigenetic transcription activation. Association with the 2-oxoglutarate dehydrogenase complex, which provides succinyl-CoA, is required for histone succinylation. In different complexes, functions either as an acetyltransferase (HAT) or as a succinyltransferase: in the SAGA and ATAC complexes, acts as a histone acetyltransferase. Has significant histone acetyltransferase activity with core histones, but not with nucleosome core particles. Has a a strong preference for acetylation of H3 at 'Lys-9' (H3K9ac). Acetylation of histones gives a specific tag for epigenetic transcription activation. Recruited by the XPC complex at promoters, where it specifically mediates acetylation of histone variant H2A.Z.1/H2A.Z, thereby promoting expression of target genes. Involved in long-term memory consolidation and synaptic plasticity: acts by promoting expression of a hippocampal gene expression network linked to neuroactive receptor signaling. Acts as a positive regulator of T-cell activation: upon TCR stimulation, recruited to the IL2 promoter following interaction with NFATC2 and catalyzes acetylation of histone H3 at 'Lys-9' (H3K9ac), leading to promote IL2 expression. Required for growth and differentiation of craniofacial cartilage and bone by regulating acetylation of histone H3 at 'Lys-9' (H3K9ac). Regulates embryonic stem cell (ESC) pluripotency and differentiation. Also acetylates non-histone proteins, such as CEBPB, MRE11, PPARGC1A, PLK4 and TBX5. Involved in heart and limb development by mediating acetylation of TBX5, acetylation regulating nucleocytoplasmic shuttling of TBX5. Acts as a negative regulator of centrosome amplification by mediating acetylation of PLK4. Acts as a negative regulator of gluconeogenesis by mediating acetylation and subsequent inactivation of PPARGC1A. Also acts as a histone glutaryltransferase: catalyzes glutarylation of histone H4 on 'Lys-91' (H4K91glu), a mark that destabilizes nucleosomes by promoting dissociation of the H2A-H2B dimers from nucleosomes. The protein is Histone acetyltransferase KAT2A of Mus musculus (Mouse).